Consider the following 91-residue polypeptide: Small ribosomal subunit protein uS15 (91 aa).

Belongs to the universal ribosomal protein uS15 family. In terms of assembly, part of the 30S ribosomal subunit. Forms a bridge to the 50S subunit in the 70S ribosome, contacting the 23S rRNA.

In terms of biological role, one of the primary rRNA binding proteins, it binds directly to 16S rRNA where it helps nucleate assembly of the platform of the 30S subunit by binding and bridging several RNA helices of the 16S rRNA. Its function is as follows. Forms an intersubunit bridge (bridge B4) with the 23S rRNA of the 50S subunit in the ribosome. This Hydrogenobaculum sp. (strain Y04AAS1) protein is Small ribosomal subunit protein uS15.